A 999-amino-acid chain; its full sequence is Signal peptide, CUB and EGF-like domain-containing protein 2 (999 aa).

Residues 1 to 31 form the signal peptide; sequence MGVAGRNRPGAAWAVLLLLLLLPPLLLLAGA. The EGF-like 1; calcium-binding domain maps to 45 to 85; sequence DVDECAQGLDDCHADALCQNTPTSYKCSCKPGYQGEGRQCE. 6 cysteine pairs are disulfide-bonded: C49–C62, C56–C71, C73–C84, C90–C102, C98–C111, and C113–C126. Residues 86–127 enclose the EGF-like 2; calcium-binding domain; sequence DIDECGNELNGGCVHDCLNIPGNYRCTCFDGFMLAHDGHNCL. Residues 128–168 enclose the EGF-like 3; calcium-binding domain; that stretch reads DVDECLENNGGCQHTCVNVMGSYECCCKEGFFLSDNQHTCI. 3 consecutive EGF-like domains span residues 177–213, 217–252, and 286–321; these read CMNK…QRDC, CNHG…GRSC, and CAVN…GKTC. The region spanning 323–363 is the EGF-like 7; calcium-binding domain; sequence DIDECQTRNGGCDHFCKNIVGSFDCGCKKGFKLLTDEKSCQ. Positions 364–402 constitute an EGF-like 8; calcium-binding domain; the sequence is DVDECSLDRTCDHSCINHPGTFACACNRGYTLYGFTHCG. Cystine bridges form between C368-C378, C374-C387, C389-C401, C407-C418, C414-C427, and C429-C442. Residues 403–443 enclose the EGF-like 9; calcium-binding domain; the sequence is DTNECSINNGGCQQVCVNTVGSYECQCHPGYKLHWNKKDCV. N659 is a glycosylation site (N-linked (GlcNAc...) asparagine). Cysteines 809 and 835 form a disulfide. The CUB domain occupies 809 to 921; the sequence is CGGELGDFTG…RGFQVPYVTY (113 aa). The segment at 847–856 is interaction with the cholesterol-anchor of SHH; it reads ILIVVPEIFL. Cysteines 862 and 883 form a disulfide.

Forms homooligomers. Forms heterooligomers with SCUBE1. Forms heterooligomers with SCUBE3. Interacts with SHH via the cholesterol anchor of the dually lipid-modified SHH (ShhNp). Interacts with PTCH1. Interacts with VEGFR2. N-glycosylated. Expressed in a broad spectrum of adult tissues.

The protein resides in the secreted. It is found in the cell surface. In terms of biological role, lipid-binding protein required for SHH long-range signaling by binding to the dually lipid-modified SHH (ShhNp) and by promoting ShhNp mobilization, solubilization and release from the cell membrane. Acts by enhancing the proteolytic processing (shedding) of the lipid-modified N- and C- terminal of ShhNp at the cell surface. Synergizes with DISP1 to increase SHH secretion. Probable cell surface coreceptor for VEGFR2 involved in VEGFR2-mediated angiogenesis. In Homo sapiens (Human), this protein is Signal peptide, CUB and EGF-like domain-containing protein 2.